The following is an 881-amino-acid chain: NACHT, LRR and PYD domains-containing protein 6 (881 aa).

The 129-residue stretch at 1 to 129 (MDAAGASCSS…EHVLRQHAKV (129 aa)) folds into the Pyrin domain. Serine 104 is modified (phosphoserine). A disordered region spans residues 154–175 (AGEDELLGTSGEPEPERARRSD). The NACHT domain occupies 194–510 (LTVVLQGPAG…EFLAALSYLL (317 aa)). 200 to 207 (GPAGIGKT) lines the ATP pocket. The LRR 1 repeat unit spans residues 459–484 (EKDLERLKLQGSQVQTMFLSKKELPG). The segment at 579-611 (QSQPKVATVGAEKKDELKDEEAEEEEEEEEEEE) is disordered. The segment covering 596-611 (KDEEAEEEEEEEEEEE) has biased composition (acidic residues). LRR repeat units follow at residues 637 to 660 (LSSL…VLSY), 749 to 772 (APSL…LLSQ), and 839 to 863 (TLSL…TLKP).

Belongs to the NLRP family. Homomultimer; forms the NLRP6 inflammasome polymeric complex, a filament composed of homopolymers in response to pathogens and other damage-associated signals. The core of NLRP6 inflammasomes consists of a signal sensor component (NLRP6), an adapter (PYCARD/ASC), which recruits effector pro-inflammatory caspases (CASP1 and CASP4). Interacts (via pyrin domain) with PYCARD/ASC (via pyrin domain); interaction takes place following NLRP6 activation and formation of liquid-liquid phase separation (LLPS), initiating nucleation which greatly enhances further addition of soluble PYCARD/ASC molecules to the speck in a prion-like polymerization process. Clustered PYCARD/ASC nucleates the formation of CASP1 (or possibly CASP4) filaments through the interaction of their respective CARD domains, acting as a platform for CASP1 polymerization. CASP1 filament formation increases local enzyme concentration, resulting in trans-autocleavage and activation. Active CASP1 then processes IL1B and IL18 precursors, leading to the release of mature cytokines in the extracellular milieu and inflammatory response. Interacts with DHX15. In terms of processing, polyubiquitinated with 'Lys-63'-linked chains, promoting the interaction with PYCARD/ASC and formation of the NLRP6 inflammasome. Deubiquitination by CYLD decreases the interaction with PYCARD/ASC. In terms of tissue distribution, detected in several tissues. Expressed in renal epithelial cells in medullary thick ascending limb of Henle, as well as in salivary gland apical epithelium (at protein level). Isoform 1 is widely expressed. Isoform 2 is primarily expressed in kidney (at protein level).

The protein localises to the cytoplasm. It localises to the inflammasome. It is found in the cell membrane. The protein resides in the nucleus membrane. Functionally, acts as the sensor component of the NLRP6 inflammasome, which mediates inflammasome activation in response to various pathogen-associated signals, leading to maturation and secretion of IL1B and IL18. Inflammasomes are supramolecular complexes that assemble in the cytosol in response to pathogens and other damage-associated signals and play critical roles in innate immunity and inflammation. Acts as a recognition receptor (PRR): recognizes and binds specific pathogens and other damage-associated signals, such as lipoteichoic acid (LTA), a cell-wall component of Gram-positive bacteria, or double stranded RNA (dsRNA). May also recognize and bind lipopolysaccharide (LPS), a major component of the outer membrane of Gram-negative bacteria; however, LPS is probably not a major activator of the NLRP6 inflammasome. Following LTA- or dsRNA-binding, NLRP6 undergoes liquid-liquid phase separation (LLPS), enhancing multivalent interactions, an essential step for the formation of the NLRP6 inflammasome polymeric complex. The NLRP6 inflammasome acts by promoting recruitment of effector pro-inflammatory caspases (CASP1 and/or CASP4) that catalyze maturation and secretion of IL1B and IL18 in the extracellular milieu. The NLRP6 inflammasome plays a central role in the maintenance of epithelial integrity and host defense against microbial infections in the intestine. Required to restrict infection against Gram-positive bacteria by recognizing lipoteichoic acid (LTA), leading to recruitment of CASP4 and CASP1, and subsequent maturation and secretion of IL1B and IL18. Involved in intestinal antiviral innate immunity together with DHX15: recognizes and binds viral dsRNA to restrict infection by enteric viruses through the interferon pathway and GSDMD-dependent release of IL18. Required to prevent infection by the apicomplexan parasite Cryptosporidium in enterocytes by promoting GSDMD-dependent release of IL18. The NLRP6 inflammasome may also regulate the gut microbiota composition by acting as a sensor of microbiota-associated metabolites to form a PYCARD/ASC-dependent inflammasome for downstream IL18 release and secretion of antimicrobial peptides. Essential for gut mucosal self-renewal and proliferation. Regulate mucus secretion in an inflammasome- and autophagy-dependent manner to prevent invasion by enteric bacteria,. During systemic bacterial infections, the NLRP6 inflammasome negatively regulates neutrophil recruitment and neutrophil extracellular traps (NETs) formation. May promote peripheral nerve recovery following injury via an inflammasome-independent mechanism. This chain is NACHT, LRR and PYD domains-containing protein 6, found in Rattus norvegicus (Rat).